Reading from the N-terminus, the 638-residue chain is Growth hormone receptor (638 aa).

A signal peptide spans 1–18 (MDLWQLLLTLAVAGSGNA). Topologically, residues 19–264 (VSGSEATPAI…SPFACEEDFQ (246 aa)) are extracellular. 2 disulfide bridges follow: cysteine 56-cysteine 66 and cysteine 101-cysteine 112. N-linked (GlcNAc...) asparagine glycosylation occurs at asparagine 115. Cysteine 126 and cysteine 140 form a disulfide bridge. Positions 151-254 (PPIGLNWTLL…EVLYVALPQM (104 aa)) constitute a Fibronectin type-III domain. 3 N-linked (GlcNAc...) asparagine glycosylation sites follow: asparagine 156, asparagine 161, and asparagine 200. Positions 240 to 244 (YGEFS) match the WSXWS motif motif. The chain crosses the membrane as a helical span at residues 265–288 (FPWFLIIIFGIFGLTMILFLFIFS). At 289-638 (KQQRIKMLIL…STDQLNKIMP (350 aa)) the chain is on the cytoplasmic side. Positions 294 to 379 (KMLILPPVPV…HEKSLNILGA (86 aa)) are required for JAK2 binding. The short motif at 297–305 (ILPPVPVPK) is the Box 1 motif element. A UbE motif motif is present at residues 340-349 (DSWVEFIELD). The residue at position 341 (serine 341) is a Phosphoserine. The segment covering 429-446 (KNQSNSPSTDTAPNTQQP) has biased composition (polar residues). The segment at 429–448 (KNQSNSPSTDTAPNTQQPGV) is disordered. 2 positions are modified to phosphotyrosine: tyrosine 487 and tyrosine 595.

The protein belongs to the type I cytokine receptor family. Type 1 subfamily. In terms of assembly, on growth hormone (GH) binding, forms homodimers and binds JAK2 via a box 1-containing domain. In terms of processing, the soluble form (GHBP) is produced by phorbol ester-promoted proteolytic cleavage at the cell surface (shedding) by ADAM17/TACE. Shedding is inhibited by growth hormone (GH) binding to the receptor probably due to a conformational change in GHR rendering the receptor inaccessible to ADAM17. Post-translationally, on GH binding, phosphorylated on tyrosine residues in the cytoplasmic domain by JAK2. Ubiquitinated by the ECS(SOCS2) complex following ligand-binding and phosphorylation by JAK2, leading to its degradation by the proteasome. Regulation by the ECS(SOCS2) complex acts as a negative feedback loop of growth hormone receptor signaling. Ubiquitination is not sufficient for GHR internalization.

Its subcellular location is the cell membrane. The protein resides in the secreted. Its function is as follows. Receptor for pituitary gland growth hormone (GH1) involved in regulating postnatal body growth. On ligand binding, couples to the JAK2/STAT5 pathway. In terms of biological role, the soluble form (GHBP) acts as a reservoir of growth hormone in plasma and may be a modulator/inhibitor of GH signaling. The chain is Growth hormone receptor (GHR) from Ailuropoda melanoleuca (Giant panda).